The primary structure comprises 626 residues: DNA mismatch repair protein MutL (626 aa).

This sequence belongs to the DNA mismatch repair MutL/HexB family.

Functionally, this protein is involved in the repair of mismatches in DNA. It is required for dam-dependent methyl-directed DNA mismatch repair. May act as a 'molecular matchmaker', a protein that promotes the formation of a stable complex between two or more DNA-binding proteins in an ATP-dependent manner without itself being part of a final effector complex. This Pelodictyon phaeoclathratiforme (strain DSM 5477 / BU-1) protein is DNA mismatch repair protein MutL.